The primary structure comprises 172 residues: Adenine phosphoribosyltransferase (172 aa).

Belongs to the purine/pyrimidine phosphoribosyltransferase family. Homodimer.

The protein resides in the cytoplasm. The enzyme catalyses AMP + diphosphate = 5-phospho-alpha-D-ribose 1-diphosphate + adenine. The protein operates within purine metabolism; AMP biosynthesis via salvage pathway; AMP from adenine: step 1/1. Catalyzes a salvage reaction resulting in the formation of AMP, that is energically less costly than de novo synthesis. In Streptococcus pyogenes serotype M12 (strain MGAS9429), this protein is Adenine phosphoribosyltransferase.